The primary structure comprises 518 residues: MTEKYRPVRDIKPAPAAMQSTKQAGHPVFRSVVAFVSVLVLLVSGLGYLAVGKVDGVASGNLNLGGGRGIQDGNAADGATDILLVGSDSRSDAQGNTLTEEELAMLRAGDEENDNTDTIMVIRVPNDGSSATAVSIPRDTYIHDDDYGNMKINGVYGAYKDARRAELMEQGFTNESELETRAKDAGREGLIDAVSDLTGITVDHYAEVGLLGFVLLTDAVGGVEVCLNNAVDEPLSGANFPAGRQTLGGSDALSYVRQRHDLPRGDLDRIVRQQSYMASLVNQVLSSGTLTNPAKLSALADAVTRSVVIDEGWEIMSFATQLQNLAGGNVTFATIPVTSIDGTGDYGESVVTIDVNQVHAFFQEALGEAEPAPEDGSDDQSADQAPDLSEVEVHVLNASYVEGLANGIAAQLQELGYSIAETGNAAEGLYYESQILAAEEDSAKALAISEALGGLPIVANSSLDDNTVIVVSAGDYAGPTAEANAVTSSTVGQPGADVGEPIESPEFDAGGDGPRCVN.

Residues 1-31 (MTEKYRPVRDIKPAPAAMQSTKQAGHPVFRS) lie on the Cytoplasmic side of the membrane. Residues 32 to 52 (VVAFVSVLVLLVSGLGYLAVG) form a helical membrane-spanning segment. The Periplasmic portion of the chain corresponds to 53-518 (KVDGVASGNL…AGGDGPRCVN (466 aa)). The tract at residues 485–518 (AVTSSTVGQPGADVGEPIESPEFDAGGDGPRCVN) is disordered.

Belongs to the LytR/CpsA/Psr (LCP) family. In terms of assembly, forms homodimers and homotetramers.

Its subcellular location is the cell inner membrane. In terms of biological role, involved in cell wall biosynthesis. May be responsible for the transfer of arabinogalactan onto peptidoglycan. In vitro, has pyrophosphatase activity. The sequence is that of Cell wall biosynthesis protein LcpA from Corynebacterium glutamicum (strain ATCC 13032 / DSM 20300 / JCM 1318 / BCRC 11384 / CCUG 27702 / LMG 3730 / NBRC 12168 / NCIMB 10025 / NRRL B-2784 / 534).